Here is a 349-residue protein sequence, read N- to C-terminus: NADH-quinone oxidoreductase subunit H (349 aa).

8 helical membrane-spanning segments follow: residues 16–36 (WPVV…MGCV), 88–108 (GLFI…WAVV), 123–143 (LLFL…AGWA), 157–177 (AAQM…VLLI), 202–222 (FLSW…ISGI), 264–284 (ILVS…PVGF), 285–305 (LPDG…IFLW), and 325–345 (VFIP…MSPL).

It belongs to the complex I subunit 1 family. As to quaternary structure, NDH-1 is composed of 14 different subunits. Subunits NuoA, H, J, K, L, M, N constitute the membrane sector of the complex.

It is found in the cell inner membrane. It carries out the reaction a quinone + NADH + 5 H(+)(in) = a quinol + NAD(+) + 4 H(+)(out). In terms of biological role, NDH-1 shuttles electrons from NADH, via FMN and iron-sulfur (Fe-S) centers, to quinones in the respiratory chain. The immediate electron acceptor for the enzyme in this species is believed to be ubiquinone. Couples the redox reaction to proton translocation (for every two electrons transferred, four hydrogen ions are translocated across the cytoplasmic membrane), and thus conserves the redox energy in a proton gradient. This subunit may bind ubiquinone. The polypeptide is NADH-quinone oxidoreductase subunit H (Azoarcus sp. (strain BH72)).